The chain runs to 141 residues: Ribosome-binding factor A (141 aa).

A disordered region spans residues 120 to 141 (DEALRAQSAGARPAGDEDPYKP).

This sequence belongs to the RbfA family. As to quaternary structure, monomer. Binds 30S ribosomal subunits, but not 50S ribosomal subunits or 70S ribosomes.

The protein resides in the cytoplasm. One of several proteins that assist in the late maturation steps of the functional core of the 30S ribosomal subunit. Associates with free 30S ribosomal subunits (but not with 30S subunits that are part of 70S ribosomes or polysomes). Required for efficient processing of 16S rRNA. May interact with the 5'-terminal helix region of 16S rRNA. The protein is Ribosome-binding factor A of Corynebacterium jeikeium (strain K411).